The following is a 780-amino-acid chain: Exocyst complex component 3-like protein (780 aa).

Belongs to the SEC6 family.

The protein localises to the cytoplasmic vesicle. It localises to the secretory vesicle. Its function is as follows. As part of the exocyst, may play a role in regulated exocytosis. This chain is Exocyst complex component 3-like protein (exoc3l1), found in Danio rerio (Zebrafish).